The chain runs to 542 residues: Chaperonin GroEL (542 aa).

Residues 29 to 32 (TLGP), 86 to 90 (DGTTT), Gly-413, and Asp-492 contribute to the ATP site.

The protein belongs to the chaperonin (HSP60) family. As to quaternary structure, forms a cylinder of 14 subunits composed of two heptameric rings stacked back-to-back. Interacts with the co-chaperonin GroES.

It is found in the cytoplasm. It catalyses the reaction ATP + H2O + a folded polypeptide = ADP + phosphate + an unfolded polypeptide.. Functionally, together with its co-chaperonin GroES, plays an essential role in assisting protein folding. The GroEL-GroES system forms a nano-cage that allows encapsulation of the non-native substrate proteins and provides a physical environment optimized to promote and accelerate protein folding. The polypeptide is Chaperonin GroEL (Nocardia asteroides).